Consider the following 493-residue polypeptide: Trigger factor (493 aa).

Residues Gly-169–Thr-254 form the PPIase FKBP-type domain. Positions Glu-439–Glu-493 are disordered.

The protein belongs to the FKBP-type PPIase family. Tig subfamily.

It localises to the cytoplasm. The enzyme catalyses [protein]-peptidylproline (omega=180) = [protein]-peptidylproline (omega=0). Involved in protein export. Acts as a chaperone by maintaining the newly synthesized protein in an open conformation. Functions as a peptidyl-prolyl cis-trans isomerase. This is Trigger factor from Allorhizobium ampelinum (strain ATCC BAA-846 / DSM 112012 / S4) (Agrobacterium vitis (strain S4)).